Reading from the N-terminus, the 266-residue chain is Undecaprenyl-diphosphatase (266 aa).

Helical transmembrane passes span Asn41–Trp61, Thr80–Phe100, Ile107–Ala127, Ile140–Leu160, Leu180–Val200, Ile213–Cys233, and Leu245–Leu265.

The protein belongs to the UppP family.

The protein localises to the cell inner membrane. It carries out the reaction di-trans,octa-cis-undecaprenyl diphosphate + H2O = di-trans,octa-cis-undecaprenyl phosphate + phosphate + H(+). In terms of biological role, catalyzes the dephosphorylation of undecaprenyl diphosphate (UPP). Confers resistance to bacitracin. In Parabacteroides distasonis (strain ATCC 8503 / DSM 20701 / CIP 104284 / JCM 5825 / NCTC 11152), this protein is Undecaprenyl-diphosphatase.